We begin with the raw amino-acid sequence, 130 residues long: Histone H2A type 1-K (130 aa).

Residues 1 to 22 (MSGRGKQGGKARAKAKTRSSRA) are disordered. Ser-2 is modified (N-acetylserine). A Phosphoserine; by RPS6KA5 modification is found at Ser-2. Arg-4 is subject to Citrulline; alternate. Arg-4 bears the Symmetric dimethylarginine; by PRMT5; alternate mark. Lys-6 and Lys-10 each carry N6-(2-hydroxyisobutyryl)lysine; alternate. Lys-6 is modified (N6-(beta-hydroxybutyryl)lysine; alternate). Residues Lys-6 and Lys-10 each carry the N6-acetyllysine; alternate modification. Residues 7–19 (QGGKARAKAKTRS) are compositionally biased toward basic residues. Position 10 is an N6-lactoyllysine; alternate (Lys-10). Lys-10 is modified (N6-succinyllysine; alternate). Glycyl lysine isopeptide (Lys-Gly) (interchain with G-Cter in ubiquitin) cross-links involve residues Lys-14 and Lys-16. Lys-37 carries the post-translational modification N6-(2-hydroxyisobutyryl)lysine; alternate. Lys-37 carries the post-translational modification N6-(beta-hydroxybutyryl)lysine; alternate. Lys-37 is subject to N6-crotonyllysine; alternate. 2 positions are modified to N6-(2-hydroxyisobutyryl)lysine: Lys-75 and Lys-76. Position 96 is an N6-(2-hydroxyisobutyryl)lysine; alternate (Lys-96). An N6-succinyllysine; alternate modification is found at Lys-96. An N6-glutaryllysine; alternate modification is found at Lys-96. Gln-105 bears the N5-methylglutamine mark. N6-(2-hydroxyisobutyryl)lysine; alternate is present on Lys-119. An N6-crotonyllysine; alternate mark is found at Lys-119 and Lys-120. N6-glutaryllysine; alternate is present on residues Lys-119 and Lys-120. N6-(beta-hydroxybutyryl)lysine; alternate is present on Lys-120. Lys-120 participates in a covalent cross-link: Glycyl lysine isopeptide (Lys-Gly) (interchain with G-Cter in ubiquitin); alternate. A Phosphothreonine; by DCAF1 modification is found at Thr-121. Lys-126 is modified (N6-(beta-hydroxybutyryl)lysine; alternate). Residue Lys-126 is modified to N6-crotonyllysine; alternate. Lys-126 carries the post-translational modification N6-glutaryllysine; alternate.

Belongs to the histone H2A family. As to quaternary structure, the nucleosome is a histone octamer containing two molecules each of H2A, H2B, H3 and H4 assembled in one H3-H4 heterotetramer and two H2A-H2B heterodimers. The octamer wraps approximately 147 bp of DNA. Deiminated on Arg-4 in granulocytes upon calcium entry. Post-translationally, monoubiquitination of Lys-120 (H2AK119Ub) by RING1, TRIM37 and RNF2/RING2 complex gives a specific tag for epigenetic transcriptional repression and participates in X chromosome inactivation of female mammals. It is involved in the initiation of both imprinted and random X inactivation. Ubiquitinated H2A is enriched in inactive X chromosome chromatin. Ubiquitination of H2A functions downstream of methylation of 'Lys-27' of histone H3 (H3K27me). H2AK119Ub by RNF2/RING2 can also be induced by ultraviolet and may be involved in DNA repair. Following DNA double-strand breaks (DSBs), it is ubiquitinated through 'Lys-63' linkage of ubiquitin moieties by the E2 ligase UBE2N and the E3 ligases RNF8 and RNF168, leading to the recruitment of repair proteins to sites of DNA damage. Ubiquitination at Lys-14 and Lys-16 (H2AK13Ub and H2AK15Ub, respectively) in response to DNA damage is initiated by RNF168 that mediates monoubiquitination at these 2 sites, and 'Lys-63'-linked ubiquitin are then conjugated to monoubiquitin; RNF8 is able to extend 'Lys-63'-linked ubiquitin chains in vitro. Deubiquitinated by USP51 at Lys-14 and Lys-16 (H2AK13Ub and H2AK15Ub, respectively) after damaged DNA is repaired. H2AK119Ub and ionizing radiation-induced 'Lys-63'-linked ubiquitination (H2AK13Ub and H2AK15Ub) are distinct events. In terms of processing, phosphorylation on Ser-2 (H2AS1ph) is enhanced during mitosis. Phosphorylation on Ser-2 by RPS6KA5/MSK1 directly represses transcription. Acetylation of H3 inhibits Ser-2 phosphorylation by RPS6KA5/MSK1. Phosphorylation at Thr-121 (H2AT120ph) by DCAF1 is present in the regulatory region of many tumor suppresor genes and down-regulates their transcription. Symmetric dimethylation on Arg-4 by the PRDM1/PRMT5 complex may play a crucial role in the germ-cell lineage. Post-translationally, glutamine methylation at Gln-105 (H2AQ104me) by FBL is specifically dedicated to polymerase I. It is present at 35S ribosomal DNA locus and impairs binding of the FACT complex. In terms of processing, crotonylation (Kcr) is specifically present in male germ cells and marks testis-specific genes in post-meiotic cells, including X-linked genes that escape sex chromosome inactivation in haploid cells. Crotonylation marks active promoters and enhancers and confers resistance to transcriptional repressors. It is also associated with post-meiotically activated genes on autosomes. Hydroxybutyrylation of histones is induced by starvation. Post-translationally, lactylated in macrophages by EP300/P300 by using lactoyl-CoA directly derived from endogenous or exogenous lactate, leading to stimulates gene transcription.

The protein resides in the nucleus. It localises to the chromosome. Core component of nucleosome. Nucleosomes wrap and compact DNA into chromatin, limiting DNA accessibility to the cellular machineries which require DNA as a template. Histones thereby play a central role in transcription regulation, DNA repair, DNA replication and chromosomal stability. DNA accessibility is regulated via a complex set of post-translational modifications of histones, also called histone code, and nucleosome remodeling. This chain is Histone H2A type 1-K, found in Mus musculus (Mouse).